The sequence spans 269 residues: Undecaprenyl-diphosphatase (269 aa).

A run of 8 helical transmembrane segments spans residues 3-23 (LLIKAFIMGIVEGLTEFLPIS), 41-61 (FATMFEIVIQLGAILAVVFYY), 78-98 (GFNLWFKIFIAFIPAAVIGLL), 107-127 (LFSPFTVAIALIAGAIMMIVI), 148-167 (SLLIGIAQVMSLFPGMSRSA), 184-204 (AEFSFFLAIPTMFAATTLSLL), 213-233 (LEWQALAVGFITSFLTALFVV), and 248-268 (FAYYRLAVGVLMILLVAEKIV).

This sequence belongs to the UppP family.

It is found in the cell membrane. It catalyses the reaction di-trans,octa-cis-undecaprenyl diphosphate + H2O = di-trans,octa-cis-undecaprenyl phosphate + phosphate + H(+). Functionally, catalyzes the dephosphorylation of undecaprenyl diphosphate (UPP). Confers resistance to bacitracin. The protein is Undecaprenyl-diphosphatase of Thermoanaerobacter sp. (strain X514).